Here is a 271-residue protein sequence, read N- to C-terminus: Probable ribosomal RNA small subunit methyltransferase A (271 aa).

Residues Asn-22, Leu-24, Gly-49, Glu-70, Asp-97, and Asn-112 each coordinate S-adenosyl-L-methionine.

Belongs to the class I-like SAM-binding methyltransferase superfamily. rRNA adenine N(6)-methyltransferase family. RsmA subfamily.

The protein resides in the cytoplasm. Functionally, specifically dimethylates two adjacent adenosines in the loop of a conserved hairpin near the 3'-end of 16S rRNA in the 30S particle. May play a critical role in biogenesis of 30S subunits. The sequence is that of Probable ribosomal RNA small subunit methyltransferase A from Methanosphaera stadtmanae (strain ATCC 43021 / DSM 3091 / JCM 11832 / MCB-3).